The primary structure comprises 349 residues: 5-deoxyribose 1-phosphate isomerase (349 aa).

Residues 49–51, R92, and Q199 contribute to the substrate site; that span reads RGA. Residue D240 is the Proton donor of the active site. A substrate-binding site is contributed by 250–251; the sequence is NK.

This sequence belongs to the EIF-2B alpha/beta/delta subunits family. DrdI subfamily.

The catalysed reaction is 5-deoxy-alpha-D-ribose 1-phosphate = 5-deoxy-D-ribulose 1-phosphate. It functions in the pathway carbohydrate degradation. Its function is as follows. Catalyzes the isomerization of 5-deoxy-alpha-D-ribose 1-phosphate to 5-deoxy-D-ribulose 1-phosphate, as part of a 5-deoxyribose salvage pathway that recycles this toxic radical SAM enzyme by-product to mainstream metabolites. This Clostridium botulinum (strain Kyoto / Type A2) protein is 5-deoxyribose 1-phosphate isomerase.